Reading from the N-terminus, the 204-residue chain is Probable nicotinate-nucleotide adenylyltransferase (204 aa).

Belongs to the NadD family.

The catalysed reaction is nicotinate beta-D-ribonucleotide + ATP + H(+) = deamido-NAD(+) + diphosphate. It functions in the pathway cofactor biosynthesis; NAD(+) biosynthesis; deamido-NAD(+) from nicotinate D-ribonucleotide: step 1/1. In terms of biological role, catalyzes the reversible adenylation of nicotinate mononucleotide (NaMN) to nicotinic acid adenine dinucleotide (NaAD). The sequence is that of Probable nicotinate-nucleotide adenylyltransferase from Clostridium beijerinckii (strain ATCC 51743 / NCIMB 8052) (Clostridium acetobutylicum).